The following is a 739-amino-acid chain: uncharacterized protein (739 aa).

8 consecutive transmembrane segments (helical) span residues 53–73, 90–110, 114–134, 178–198, 421–441, 457–477, 491–511, and 532–552; these read LALG…ALTV, WHLF…AAIP, LMFI…GTFM, TYIL…QLGL, LIWI…VCIV, AFLR…LALM, GLAM…LPAV, and IVYF…SWMY.

Belongs to the aromatic acid exporter ArAE (TC 2.A.85) family.

The protein localises to the cell membrane. This is an uncharacterized protein from Gluconobacter oxydans (strain 621H) (Gluconobacter suboxydans).